The sequence spans 338 residues: Anthranilate phosphoribosyltransferase (338 aa).

Residues Gly-78, 81–82, Ser-86, 88–91, 106–114, and Ser-118 each bind 5-phospho-alpha-D-ribose 1-diphosphate; these read GD, NIST, and KHGNKSITS. Gly-78 contacts anthranilate. Ser-90 provides a ligand contact to Mg(2+). An anthranilate-binding site is contributed by Asn-109. Position 163 (Arg-163) interacts with anthranilate. Positions 222 and 223 each coordinate Mg(2+).

The protein belongs to the anthranilate phosphoribosyltransferase family. Homodimer. It depends on Mg(2+) as a cofactor.

It carries out the reaction N-(5-phospho-beta-D-ribosyl)anthranilate + diphosphate = 5-phospho-alpha-D-ribose 1-diphosphate + anthranilate. Its pathway is amino-acid biosynthesis; L-tryptophan biosynthesis; L-tryptophan from chorismate: step 2/5. In terms of biological role, catalyzes the transfer of the phosphoribosyl group of 5-phosphorylribose-1-pyrophosphate (PRPP) to anthranilate to yield N-(5'-phosphoribosyl)-anthranilate (PRA). In Staphylococcus carnosus (strain TM300), this protein is Anthranilate phosphoribosyltransferase.